The chain runs to 466 residues: UDP-N-acetylmuramoylalanine--D-glutamate ligase (466 aa).

122 to 128 (GTNGKTT) is an ATP binding site.

This sequence belongs to the MurCDEF family.

Its subcellular location is the cytoplasm. The catalysed reaction is UDP-N-acetyl-alpha-D-muramoyl-L-alanine + D-glutamate + ATP = UDP-N-acetyl-alpha-D-muramoyl-L-alanyl-D-glutamate + ADP + phosphate + H(+). Its pathway is cell wall biogenesis; peptidoglycan biosynthesis. In terms of biological role, cell wall formation. Catalyzes the addition of glutamate to the nucleotide precursor UDP-N-acetylmuramoyl-L-alanine (UMA). The sequence is that of UDP-N-acetylmuramoylalanine--D-glutamate ligase from Aromatoleum aromaticum (strain DSM 19018 / LMG 30748 / EbN1) (Azoarcus sp. (strain EbN1)).